The sequence spans 131 residues: Profilin-6 (131 aa).

Cys-13 and Cys-115 are oxidised to a cystine. The short motif at 81-97 is the Involved in PIP2 interaction element; it reads AVIRGKKGAGGITIKKT. A Phosphothreonine modification is found at Thr-111.

Belongs to the profilin family. In terms of assembly, occurs in many kinds of cells as a complex with monomeric actin in a 1:1 ratio. Post-translationally, phosphorylated by MAP kinases.

The protein localises to the cytoplasm. It is found in the cytoskeleton. Its function is as follows. Binds to actin and affects the structure of the cytoskeleton. At high concentrations, profilin prevents the polymerization of actin, whereas it enhances it at low concentrations. This Phleum pratense (Common timothy) protein is Profilin-6.